Reading from the N-terminus, the 391-residue chain is 23S rRNA (uracil(747)-C(5))-methyltransferase RlmC (391 aa).

[4Fe-4S] cluster contacts are provided by C5, C13, C16, and C95. Residues Q220, F249, E276, and N322 each contribute to the S-adenosyl-L-methionine site. C349 functions as the Nucleophile in the catalytic mechanism.

The protein belongs to the class I-like SAM-binding methyltransferase superfamily. RNA M5U methyltransferase family. RlmC subfamily.

The catalysed reaction is uridine(747) in 23S rRNA + S-adenosyl-L-methionine = 5-methyluridine(747) in 23S rRNA + S-adenosyl-L-homocysteine + H(+). Catalyzes the formation of 5-methyl-uridine at position 747 (m5U747) in 23S rRNA. The protein is 23S rRNA (uracil(747)-C(5))-methyltransferase RlmC of Actinobacillus pleuropneumoniae serotype 5b (strain L20).